The primary structure comprises 721 residues: Polyribonucleotide nucleotidyltransferase (721 aa).

Positions 511 and 517 each coordinate Mg(2+). A KH domain is found at 577–637 (PSTDFFHINP…SGVQAAREHI (61 aa)). Residues 654-721 (GDIHKGIVKK…KGNKISLGIA (68 aa)) enclose the S1 motif domain.

It belongs to the polyribonucleotide nucleotidyltransferase family. It depends on Mg(2+) as a cofactor.

Its subcellular location is the cytoplasm. The enzyme catalyses RNA(n+1) + phosphate = RNA(n) + a ribonucleoside 5'-diphosphate. In terms of biological role, involved in mRNA degradation. Catalyzes the phosphorolysis of single-stranded polyribonucleotides processively in the 3'- to 5'-direction. The polypeptide is Polyribonucleotide nucleotidyltransferase (Sulfurimonas denitrificans (strain ATCC 33889 / DSM 1251) (Thiomicrospira denitrificans (strain ATCC 33889 / DSM 1251))).